The sequence spans 78 residues: Exodeoxyribonuclease 7 small subunit (78 aa).

It belongs to the XseB family. In terms of assembly, heterooligomer composed of large and small subunits.

The protein localises to the cytoplasm. The catalysed reaction is Exonucleolytic cleavage in either 5'- to 3'- or 3'- to 5'-direction to yield nucleoside 5'-phosphates.. Bidirectionally degrades single-stranded DNA into large acid-insoluble oligonucleotides, which are then degraded further into small acid-soluble oligonucleotides. The chain is Exodeoxyribonuclease 7 small subunit from Cutibacterium acnes (strain DSM 16379 / KPA171202) (Propionibacterium acnes).